The primary structure comprises 265 residues: Type III pantothenate kinase (265 aa).

9-16 (DAGNSRIK) contributes to the ATP binding site. Residues tyrosine 96 and 103–106 (GSDR) contribute to the substrate site. Aspartate 105 acts as the Proton acceptor in catalysis. Threonine 129 serves as a coordination point for ATP. Threonine 189 lines the substrate pocket.

This sequence belongs to the type III pantothenate kinase family. In terms of assembly, homodimer. NH4(+) serves as cofactor. K(+) is required as a cofactor.

Its subcellular location is the cytoplasm. It catalyses the reaction (R)-pantothenate + ATP = (R)-4'-phosphopantothenate + ADP + H(+). It participates in cofactor biosynthesis; coenzyme A biosynthesis; CoA from (R)-pantothenate: step 1/5. Catalyzes the phosphorylation of pantothenate (Pan), the first step in CoA biosynthesis. In Burkholderia orbicola (strain AU 1054), this protein is Type III pantothenate kinase.